The primary structure comprises 275 residues: Fructoselysine 3-epimerase (275 aa).

Glu-148 functions as the Proton donor/acceptor in the catalytic mechanism. Residues Glu-148, Asp-181, His-207, and Glu-247 each coordinate a divalent metal cation. The active-site Proton donor/acceptor is the Glu-247.

It belongs to the FrlC family. As to quaternary structure, homooctamer. It depends on Ni(2+) as a cofactor. Requires Co(2+) as cofactor.

The catalysed reaction is N(6)-(D-psicosyl)-L-lysine = N(6)-(D-fructosyl)-L-lysine. Catalyzes the reversible interconversion of fructoselysine with its C-3 epimer, psicoselysine. Allows E.coli to utilize psicoselysine for growth. Does not act on psicose or fructoselysine 6-phosphate. This Escherichia coli O157:H7 protein is Fructoselysine 3-epimerase (frlC).